The sequence spans 283 residues: 4-hydroxy-3-methylbut-2-enyl diphosphate reductase (283 aa).

[4Fe-4S] cluster is bound at residue Cys12. The (2E)-4-hydroxy-3-methylbut-2-enyl diphosphate site is built by His40 and His73. Positions 40 and 73 each coordinate dimethylallyl diphosphate. Isopentenyl diphosphate is bound by residues His40 and His73. Cys95 is a binding site for [4Fe-4S] cluster. Position 123 (His123) interacts with (2E)-4-hydroxy-3-methylbut-2-enyl diphosphate. His123 is a binding site for dimethylallyl diphosphate. Isopentenyl diphosphate is bound at residue His123. Glu125 acts as the Proton donor in catalysis. Thr161 lines the (2E)-4-hydroxy-3-methylbut-2-enyl diphosphate pocket. Position 189 (Cys189) interacts with [4Fe-4S] cluster. Positions 217, 219, and 261 each coordinate (2E)-4-hydroxy-3-methylbut-2-enyl diphosphate. Dimethylallyl diphosphate-binding residues include Ser217, Asn219, and Ser261. Residues Ser217, Asn219, and Ser261 each contribute to the isopentenyl diphosphate site.

Belongs to the IspH family. [4Fe-4S] cluster serves as cofactor.

It carries out the reaction isopentenyl diphosphate + 2 oxidized [2Fe-2S]-[ferredoxin] + H2O = (2E)-4-hydroxy-3-methylbut-2-enyl diphosphate + 2 reduced [2Fe-2S]-[ferredoxin] + 2 H(+). The enzyme catalyses dimethylallyl diphosphate + 2 oxidized [2Fe-2S]-[ferredoxin] + H2O = (2E)-4-hydroxy-3-methylbut-2-enyl diphosphate + 2 reduced [2Fe-2S]-[ferredoxin] + 2 H(+). The protein operates within isoprenoid biosynthesis; dimethylallyl diphosphate biosynthesis; dimethylallyl diphosphate from (2E)-4-hydroxy-3-methylbutenyl diphosphate: step 1/1. It participates in isoprenoid biosynthesis; isopentenyl diphosphate biosynthesis via DXP pathway; isopentenyl diphosphate from 1-deoxy-D-xylulose 5-phosphate: step 6/6. In terms of biological role, catalyzes the conversion of 1-hydroxy-2-methyl-2-(E)-butenyl 4-diphosphate (HMBPP) into a mixture of isopentenyl diphosphate (IPP) and dimethylallyl diphosphate (DMAPP). Acts in the terminal step of the DOXP/MEP pathway for isoprenoid precursor biosynthesis. This Geobacter sp. (strain M21) protein is 4-hydroxy-3-methylbut-2-enyl diphosphate reductase.